Reading from the N-terminus, the 367-residue chain is MSDTRPQIKTWIEGIHAYVPGKATGAQGQALIKLSANENPLGCSPKALEALDAPGNPATYPDPDAKALRAKLAEVHGLDAGRIVCGTGSDELLNLAAQAFAGPGDEVLFSTYSFSVYDIAARRCGATPVEAPDADYAADVDALLAAVTDKTRVVFVANPNNPTGSFLPRDEIARLHAGLPQDVLFVLDQAYAEYLTPEEDDGGFALAAAHENVLVTRTFSKAYGLAGERIGWATGAPHFIDALNRVRGPFNVTNSGQAAALAGVDDQNFIDRTRDHNTRELTRFTDAMAALGNHGIRPLPSKANFALVLFEGTLAAETALSALADAGYAVRHLPGQGLPHGLRITIGTAEDMDRIARTIAEAAEAAQ.

N6-(pyridoxal phosphate)lysine is present on Lys221.

Belongs to the class-II pyridoxal-phosphate-dependent aminotransferase family. Histidinol-phosphate aminotransferase subfamily. In terms of assembly, homodimer. The cofactor is pyridoxal 5'-phosphate.

It carries out the reaction L-histidinol phosphate + 2-oxoglutarate = 3-(imidazol-4-yl)-2-oxopropyl phosphate + L-glutamate. Its pathway is amino-acid biosynthesis; L-histidine biosynthesis; L-histidine from 5-phospho-alpha-D-ribose 1-diphosphate: step 7/9. The sequence is that of Histidinol-phosphate aminotransferase from Erythrobacter litoralis (strain HTCC2594).